The primary structure comprises 418 residues: Gamma-glutamyl phosphate reductase (418 aa).

It belongs to the gamma-glutamyl phosphate reductase family.

The protein localises to the cytoplasm. The enzyme catalyses L-glutamate 5-semialdehyde + phosphate + NADP(+) = L-glutamyl 5-phosphate + NADPH + H(+). Its pathway is amino-acid biosynthesis; L-proline biosynthesis; L-glutamate 5-semialdehyde from L-glutamate: step 2/2. Catalyzes the NADPH-dependent reduction of L-glutamate 5-phosphate into L-glutamate 5-semialdehyde and phosphate. The product spontaneously undergoes cyclization to form 1-pyrroline-5-carboxylate. The sequence is that of Gamma-glutamyl phosphate reductase from Geobacter sulfurreducens (strain ATCC 51573 / DSM 12127 / PCA).